A 159-amino-acid polypeptide reads, in one-letter code: Protein-export protein SecB (159 aa).

It belongs to the SecB family. In terms of assembly, homotetramer, a dimer of dimers. One homotetramer interacts with 1 SecA dimer.

The protein localises to the cytoplasm. In terms of biological role, one of the proteins required for the normal export of preproteins out of the cell cytoplasm. It is a molecular chaperone that binds to a subset of precursor proteins, maintaining them in a translocation-competent state. It also specifically binds to its receptor SecA. The protein is Protein-export protein SecB of Shewanella amazonensis (strain ATCC BAA-1098 / SB2B).